A 200-amino-acid polypeptide reads, in one-letter code: uncharacterized protein (200 aa).

Positions 1-24 (MSRVFSCVLRACVCAGLCCWVCMG) are cleaved as a signal peptide. The interval 124–200 (GGRDLPMHGA…GEGGDNGEGE (77 aa)) is disordered. The span at 184 to 200 (LGDEGETGEGGDNGEGE) shows a compositional bias: acidic residues.

This is an uncharacterized protein from Homo sapiens (Human).